Here is a 508-residue protein sequence, read N- to C-terminus: NAD(P)H-quinone oxidoreductase subunit 2 B, chloroplastic (508 aa).

The next 13 helical transmembrane spans lie at 24 to 44 (LLLF…GLIL), 59 to 79 (WLYF…LFRW), 99 to 119 (IFQF…VEYI), 124 to 144 (MAIT…MFLC), 149 to 169 (FITI…LSGY), 184 to 204 (LLMG…LYGL), 227 to 247 (PGIS…LSPA), 295 to 315 (WHLL…LIAI), 323 to 343 (MLAY…IVGD), 354 to 374 (YMLF…LFGL), 395 to 415 (ALSL…AGFF), 418 to 438 (LYLF…IGLL), and 482 to 502 (MIVC…IIAI).

This sequence belongs to the complex I subunit 2 family. As to quaternary structure, NDH is composed of at least 16 different subunits, 5 of which are encoded in the nucleus.

It is found in the plastid. The protein localises to the chloroplast thylakoid membrane. It carries out the reaction a plastoquinone + NADH + (n+1) H(+)(in) = a plastoquinol + NAD(+) + n H(+)(out). The enzyme catalyses a plastoquinone + NADPH + (n+1) H(+)(in) = a plastoquinol + NADP(+) + n H(+)(out). NDH shuttles electrons from NAD(P)H:plastoquinone, via FMN and iron-sulfur (Fe-S) centers, to quinones in the photosynthetic chain and possibly in a chloroplast respiratory chain. The immediate electron acceptor for the enzyme in this species is believed to be plastoquinone. Couples the redox reaction to proton translocation, and thus conserves the redox energy in a proton gradient. The chain is NAD(P)H-quinone oxidoreductase subunit 2 B, chloroplastic from Ipomoea purpurea (Common morning glory).